A 115-amino-acid polypeptide reads, in one-letter code: CRISPR-associated endoribonuclease Cas2 (115 aa).

Residue Asp22 coordinates Mg(2+).

Belongs to the CRISPR-associated endoribonuclease Cas2 protein family. In terms of assembly, homodimer, forms a heterotetramer with a Cas1 homodimer. It depends on Mg(2+) as a cofactor.

Its function is as follows. CRISPR (clustered regularly interspaced short palindromic repeat), is an adaptive immune system that provides protection against mobile genetic elements (viruses, transposable elements and conjugative plasmids). CRISPR clusters contain sequences complementary to antecedent mobile elements and target invading nucleic acids. CRISPR clusters are transcribed and processed into CRISPR RNA (crRNA). Functions as a ssRNA-specific endoribonuclease. Involved in the integration of spacer DNA into the CRISPR cassette. The chain is CRISPR-associated endoribonuclease Cas2 from Flavobacterium psychrophilum (strain ATCC 49511 / DSM 21280 / CIP 103535 / JIP02/86).